Reading from the N-terminus, the 146-residue chain is uncharacterized protein (146 aa).

This is an uncharacterized protein from Escherichia coli (strain K12).